A 161-amino-acid polypeptide reads, in one-letter code: MRAALQNSSVIGPTVGFVRLPHAEGLPLPAYESTGAAGMDLRAAVPDDRPLLILPGKRSLVPTGLILEIPEGMEGQVRPRSGLAFKHGLTVLNSPGTVDSDYRGEVKVLLINLGDEDFAVTRGMRIAQIVFAVVTQAAVEERSLAGGTARGSGGFGSTGTV.

Substrate is bound by residues 80–82, Asn93, 97–99, and Lys107; these read RSG and TVD.

It belongs to the dUTPase family. Requires Mg(2+) as cofactor.

The catalysed reaction is dUTP + H2O = dUMP + diphosphate + H(+). Its pathway is pyrimidine metabolism; dUMP biosynthesis; dUMP from dCTP (dUTP route): step 2/2. Its function is as follows. This enzyme is involved in nucleotide metabolism: it produces dUMP, the immediate precursor of thymidine nucleotides and it decreases the intracellular concentration of dUTP so that uracil cannot be incorporated into DNA. The sequence is that of Deoxyuridine 5'-triphosphate nucleotidohydrolase from Mesorhizobium japonicum (strain LMG 29417 / CECT 9101 / MAFF 303099) (Mesorhizobium loti (strain MAFF 303099)).